A 726-amino-acid polypeptide reads, in one-letter code: Methionine--tRNA ligase (726 aa).

The 'HIGH' region signature appears at 12–22; it reads PYVNNIPHLGN. Zn(2+)-binding residues include cysteine 143, cysteine 146, cysteine 155, and cysteine 158. The short motif at 330-334 is the 'KMSKS' region element; it reads KFSKS. An ATP-binding site is contributed by lysine 333. The tRNA-binding domain occupies 562-667; it reads FSEQICLKTV…DNPIPGERVI (106 aa).

It belongs to the class-I aminoacyl-tRNA synthetase family. MetG type 1 subfamily. Homodimer. Zn(2+) serves as cofactor.

It localises to the cytoplasm. It catalyses the reaction tRNA(Met) + L-methionine + ATP = L-methionyl-tRNA(Met) + AMP + diphosphate. Is required not only for elongation of protein synthesis but also for the initiation of all mRNA translation through initiator tRNA(fMet) aminoacylation. This chain is Methionine--tRNA ligase, found in Borrelia duttonii (strain Ly).